Consider the following 367-residue polypeptide: D-alanine--D-alanine ligase (367 aa).

One can recognise an ATP-grasp domain in the interval 148–357 (KMAFEQAGLP…FPELVDKLVQ (210 aa)). An ATP-binding site is contributed by 184 to 239 (EASLGYPCFVKPANLGSSVGISKVRSRQELEDALDNAANYDRRIIVEAGVVAREVE). Residues aspartate 310, glutamate 324, and asparagine 326 each coordinate Mg(2+).

Belongs to the D-alanine--D-alanine ligase family. The cofactor is Mg(2+). Mn(2+) serves as cofactor.

The protein localises to the cytoplasm. It catalyses the reaction 2 D-alanine + ATP = D-alanyl-D-alanine + ADP + phosphate + H(+). The protein operates within cell wall biogenesis; peptidoglycan biosynthesis. Its function is as follows. Cell wall formation. This Trichormus variabilis (strain ATCC 29413 / PCC 7937) (Anabaena variabilis) protein is D-alanine--D-alanine ligase.